A 39-amino-acid polypeptide reads, in one-letter code: Photosystem I reaction center subunit IX (39 aa).

A helical membrane pass occupies residues 7 to 27; the sequence is FLTTAPVAFILFSSFVFALFI.

This sequence belongs to the PsaJ family.

It is found in the cellular thylakoid membrane. Its function is as follows. May help in the organization of the PsaE and PsaF subunits. The chain is Photosystem I reaction center subunit IX from Synechococcus sp. (strain JA-3-3Ab) (Cyanobacteria bacterium Yellowstone A-Prime).